The primary structure comprises 471 residues: Ribulose bisphosphate carboxylase large chain (471 aa).

Residues N119 and T169 each contribute to the substrate site. K171 functions as the Proton acceptor in the catalytic mechanism. A substrate-binding site is contributed by K173. 3 residues coordinate Mg(2+): K197, D199, and E200. K197 bears the N6-carboxylysine mark. The active-site Proton acceptor is the H290. Substrate contacts are provided by R291, H323, and S375.

It belongs to the RuBisCO large chain family. Type I subfamily. As to quaternary structure, heterohexadecamer of 8 large chains and 8 small chains; disulfide-linked. The disulfide link is formed within the large subunit homodimers. The cofactor is Mg(2+). In terms of processing, the disulfide bond which can form in the large chain dimeric partners within the hexadecamer appears to be associated with oxidative stress and protein turnover.

The protein resides in the carboxysome. The catalysed reaction is 2 (2R)-3-phosphoglycerate + 2 H(+) = D-ribulose 1,5-bisphosphate + CO2 + H2O. The enzyme catalyses D-ribulose 1,5-bisphosphate + O2 = 2-phosphoglycolate + (2R)-3-phosphoglycerate + 2 H(+). In terms of biological role, ruBisCO catalyzes two reactions: the carboxylation of D-ribulose 1,5-bisphosphate, the primary event in carbon dioxide fixation, as well as the oxidative fragmentation of the pentose substrate in the photorespiration process. Both reactions occur simultaneously and in competition at the same active site. The protein is Ribulose bisphosphate carboxylase large chain of Microcystis aeruginosa (strain NIES-843 / IAM M-2473).